We begin with the raw amino-acid sequence, 135 residues long: ATP synthase epsilon chain (135 aa).

Positions 90–103 (DVRRAESAKERAES) are enriched in basic and acidic residues. The tract at residues 90–115 (DVRRAESAKERAESHLNNNDEDTDIN) is disordered.

Belongs to the ATPase epsilon chain family. F-type ATPases have 2 components, CF(1) - the catalytic core - and CF(0) - the membrane proton channel. CF(1) has five subunits: alpha(3), beta(3), gamma(1), delta(1), epsilon(1). CF(0) has three main subunits: a, b and c.

The protein resides in the cell membrane. Functionally, produces ATP from ADP in the presence of a proton gradient across the membrane. This is ATP synthase epsilon chain from Staphylococcus carnosus (strain TM300).